We begin with the raw amino-acid sequence, 542 residues long: MTTQTPPITNPSEKLPTEPINKALNRQMLVILDFGSQYSELIARRIRETQVYSEVLSYRTTIEQIRQLNPRGIILSGGPNSVYDNRAPQCDPEIFHLGVPILGVCYGMQLMVQQLGGQVERAKRGEYGKASLFIDDPTDLLTNVEDGSTMWMSHGDSCTQLPEGFDILAHTENTSCAAIAHHQKKLFGVQFHPEVVHSVGGIALIRNFVYHICQCEPTWTTEAFVEESIREIRAKVGDKRVLLALSGGVDSSTLAFLLHRAIGDNLTCMFIDQGFMRKGEPERLVEIFDKQFHIPVEYVNARTRFLEQLAGVTDPETKRRLIGHEFIQVFEEESERLGPFDYLAQGTLYPDVIESADTNVDPQTGERVAVKIKSHHNVGGLPKNLRFKLVEPLRKLFKDEVRKLGRAIGLPEEIVRRHPFPGPGLAIRIIGEVTAERLNILRDADFIVRDEISKQGMYHDFWQAFAVLLPVRSVGVMGDRRTYAHPIVLRLITSEDGMTADWAKVPYDLLETISNRIVNEVKGVNRVVYDITSKPPGTIEWE.

The Glutamine amidotransferase type-1 domain occupies 28–218 (MLVILDFGSQ…VYHICQCEPT (191 aa)). The Nucleophile role is filled by Cys105. Active-site residues include His192 and Glu194. A GMPS ATP-PPase domain is found at 219–417 (WTTEAFVEES…IGLPEEIVRR (199 aa)). 246 to 252 (SGGVDSS) serves as a coordination point for ATP.

As to quaternary structure, homodimer.

The enzyme catalyses XMP + L-glutamine + ATP + H2O = GMP + L-glutamate + AMP + diphosphate + 2 H(+). It functions in the pathway purine metabolism; GMP biosynthesis; GMP from XMP (L-Gln route): step 1/1. In terms of biological role, catalyzes the synthesis of GMP from XMP. This is GMP synthase [glutamine-hydrolyzing] from Rippkaea orientalis (strain PCC 8801 / RF-1) (Cyanothece sp. (strain PCC 8801)).